The following is a 356-amino-acid chain: Glutamine synthetase N-1 (356 aa).

The GS beta-grasp domain maps to 19–99; that stretch reads VIAEYIWVGG…VMCDAYTPAG (81 aa). The GS catalytic domain maps to 106–356; the sequence is KRHNAAKIFS…IAETTLLWKP (251 aa).

It belongs to the glutamine synthetase family. As to quaternary structure, homooctamer. In terms of tissue distribution, this is a nodule isozyme.

Its subcellular location is the cytoplasm. It catalyses the reaction L-glutamate + NH4(+) + ATP = L-glutamine + ADP + phosphate + H(+). The chain is Glutamine synthetase N-1 (Gln-gamma) from Phaseolus vulgaris (Kidney bean).